The following is a 105-amino-acid chain: uncharacterized protein (105 aa).

The interval 47 to 105 (ENASAPRIQPSVTPSPAAPPSTDQLMMEKMMGSAGLNKYRKQEKEKQEEDGNGESLFDF) is disordered. Basic and acidic residues predominate over residues 86-95 (RKQEKEKQEE).

This is an uncharacterized protein from Bacillus subtilis (strain 168).